A 40-amino-acid polypeptide reads, in one-letter code: Proteinase inhibitor IIB (40 aa).

Intrachain disulfides connect Cys2–Cys16, Cys6–Cys28, and Cys12–Cys38.

It belongs to the protease inhibitor I20 (potato type II proteinase inhibitor) family.

The protein resides in the secreted. In terms of biological role, inhibits chymotrypsin and subtilisin strongly. The polypeptide is Proteinase inhibitor IIB (Solanum tuberosum (Potato)).